Consider the following 148-residue polypeptide: Wheatwin-2 (148 aa).

The N-terminal stretch at Met1–Ala23 is a signal peptide. Residue Gln24 is modified to Pyrrolidone carboxylic acid. A Barwin domain is found at Gln24 to Asp148. 3 disulfide bridges follow: Cys54–Cys86, Cys75–Cys109, and Cys89–Cys146.

In terms of assembly, monomer.

In terms of biological role, shows antifungal activity towards B.cinerea and towards the wheat-specific pathogenic fungi F.culmorum and F.graminearum (groups 1 and 2). The protein is Wheatwin-2 (PR4B) of Triticum aestivum (Wheat).